The primary structure comprises 687 residues: UvrABC system protein B (687 aa).

The Helicase ATP-binding domain maps to 26–414 (EGLAAGEMYQ…GAVIEQVVRP (389 aa)). 39–46 (GVTGSGKT) provides a ligand contact to ATP. The Beta-hairpin signature appears at 92–115 (YYDYYQPEAYVPASDTYIGKDASV). In terms of domain architecture, Helicase C-terminal spans 430 to 596 (QVDDLLSEIR…GIQKAVREII (167 aa)). The UVR domain occupies 630 to 665 (AKRLQQLERQMHKHAQNLEFEQAARLRDEIKRIKGW).

This sequence belongs to the UvrB family. In terms of assembly, forms a heterotetramer with UvrA during the search for lesions. Interacts with UvrC in an incision complex.

It localises to the cytoplasm. Its function is as follows. The UvrABC repair system catalyzes the recognition and processing of DNA lesions. A damage recognition complex composed of 2 UvrA and 2 UvrB subunits scans DNA for abnormalities. Upon binding of the UvrA(2)B(2) complex to a putative damaged site, the DNA wraps around one UvrB monomer. DNA wrap is dependent on ATP binding by UvrB and probably causes local melting of the DNA helix, facilitating insertion of UvrB beta-hairpin between the DNA strands. Then UvrB probes one DNA strand for the presence of a lesion. If a lesion is found the UvrA subunits dissociate and the UvrB-DNA preincision complex is formed. This complex is subsequently bound by UvrC and the second UvrB is released. If no lesion is found, the DNA wraps around the other UvrB subunit that will check the other stand for damage. This is UvrABC system protein B from Nitrosococcus oceani (strain ATCC 19707 / BCRC 17464 / JCM 30415 / NCIMB 11848 / C-107).